Reading from the N-terminus, the 87-residue chain is Sec-independent protein translocase protein TatA (87 aa).

Residues 3–23 (IFGIGLPEMIVILVVALLIFG) form a helical membrane-spanning segment. The disordered stretch occupies residues 61–87 (EGVKVSTSASEPEKVVDVSSATNTNKN).

It belongs to the TatA/E family. Forms a complex with TatC.

The protein localises to the cell inner membrane. Part of the twin-arginine translocation (Tat) system that transports large folded proteins containing a characteristic twin-arginine motif in their signal peptide across membranes. TatA could form the protein-conducting channel of the Tat system. This is Sec-independent protein translocase protein TatA from Trichodesmium erythraeum (strain IMS101).